A 471-amino-acid chain; its full sequence is MATFPPLPMTHTRLAILARQKLPCSSKKIPRAQLIKEKEDIDYYLEQNFKGLSKEEVAAHRNSYKKSICVDMLRDGFHKSFTELFALMEQWDKLPEAAKAQSLFWQQRPLEDQPDKLDNFYHYLTRAEAAERKGYYEEVYNNLYALACYFDNSEDKWVRNHFYERCFNIAQLIKADGGKKEAEAESHMGLLFEEEGELLKAAEHYEAFHELTHGRLWKDGTGQLLNLVACESLVRTYRLLSDRMLENKDYKQAIKILIKASEIAREGNDRSMEGEASYYLGLAHLASGEYETALTVLNRYSEISTSLDDDHGLGRAYEAIAKALQSQGETTEAINYLEKFVTIARNNLQSLDMIRACTMLGDIYNEKGQYSKASEYFQQAFSTAMELMKTALMDETKVHYGIARAHQMMLAMKGYIESADSNGLNCLLSWKETRTQIEYDPILGESRRATEDNIYQLPDAEEETRRSPENQ.

TPR repeat units lie at residues 92–131 (DKLP…EAAE), 136–173 (YEEV…AQLI), 182–215 (AEAE…THGR), 234–267 (VRTY…AREG), 274–307 (GEAS…STSL), 314–347 (GRAY…ARNN), and 354–387 (IRAC…AMEL). A disordered region spans residues 449 to 471 (ATEDNIYQLPDAEEETRRSPENQ).

Expressed in spermatozoa (at protein level).

It is found in the cytoplasm. Its subcellular location is the cytoskeleton. The protein resides in the flagellum axoneme. Axonemal protein which is implicated in axonemal and/or peri-axonemal structure assembly and regulates flagellum assembly and beating and therefore sperm motility. This Mus musculus (Mouse) protein is Tetratricopeptide repeat protein 29 (Ttc29).